Consider the following 380-residue polypeptide: Mitogen-activated protein kinase mpkC (380 aa).

Residues 20–300 (YVNLQPIGMG…AQDALRHPYL (281 aa)) form the Protein kinase domain. ATP contacts are provided by residues 26–34 (IGMGSFGLV) and K49. The active-site Proton acceptor is the D141. Phosphothreonine is present on T171. Positions 171-173 (TGY) match the TXY motif. At Y173 the chain carries Phosphotyrosine.

This sequence belongs to the protein kinase superfamily. Ser/Thr protein kinase family. MAP kinase subfamily. HOG1 sub-subfamily. Mg(2+) serves as cofactor. In terms of processing, dually phosphorylated on Thr-171 and Tyr-173, which activates the enzyme.

It carries out the reaction L-seryl-[protein] + ATP = O-phospho-L-seryl-[protein] + ADP + H(+). The catalysed reaction is L-threonyl-[protein] + ATP = O-phospho-L-threonyl-[protein] + ADP + H(+). Its activity is regulated as follows. Activated by tyrosine and threonine phosphorylation. In terms of biological role, mitogen-activated protein kinase required for growth on media where sorbitol or mannitol is the sole carbon source. This Aspergillus clavatus (strain ATCC 1007 / CBS 513.65 / DSM 816 / NCTC 3887 / NRRL 1 / QM 1276 / 107) protein is Mitogen-activated protein kinase mpkC (mpkC).